The chain runs to 782 residues: Endonuclease MutS2 (782 aa).

336 to 343 serves as a coordination point for ATP; that stretch reads GPNTGGKT. The 76-residue stretch at 707–782 folds into the Smr domain; that stretch reads LDLRGYRYED…GFGVTVATLK (76 aa).

This sequence belongs to the DNA mismatch repair MutS family. MutS2 subfamily. As to quaternary structure, homodimer. Binds to stalled ribosomes, contacting rRNA.

Endonuclease that is involved in the suppression of homologous recombination and thus may have a key role in the control of bacterial genetic diversity. Functionally, acts as a ribosome collision sensor, splitting the ribosome into its 2 subunits. Detects stalled/collided 70S ribosomes which it binds and splits by an ATP-hydrolysis driven conformational change. Acts upstream of the ribosome quality control system (RQC), a ribosome-associated complex that mediates the extraction of incompletely synthesized nascent chains from stalled ribosomes and their subsequent degradation. Probably generates substrates for RQC. The sequence is that of Endonuclease MutS2 from Staphylococcus aureus (strain MSSA476).